The primary structure comprises 486 residues: Ribosomal RNA small subunit methyltransferase F (486 aa).

S-adenosyl-L-methionine-binding positions include Ala-122–Lys-128, Glu-146, Asp-173, and Asp-191. Residue Cys-244 is the Nucleophile of the active site.

Belongs to the class I-like SAM-binding methyltransferase superfamily. RsmB/NOP family.

The protein resides in the cytoplasm. It carries out the reaction cytidine(1407) in 16S rRNA + S-adenosyl-L-methionine = 5-methylcytidine(1407) in 16S rRNA + S-adenosyl-L-homocysteine + H(+). Functionally, specifically methylates the cytosine at position 1407 (m5C1407) of 16S rRNA. This Shewanella loihica (strain ATCC BAA-1088 / PV-4) protein is Ribosomal RNA small subunit methyltransferase F.